The sequence spans 485 residues: L-ornithine N(5)-oxygenase (485 aa).

Residues 49-57 (ERQQQFVWH) and glutamine 68 contribute to the FAD site. Lysine 73 contacts L-ornithine. Valine 134 contacts FAD. Arginine 243 contributes to the NADP(+) binding site. Residues 257-260 (NEIF) and asparagine 287 contribute to the L-ornithine site. 287–289 (NYS) is a binding site for NADP(+). FAD is bound at residue 425–427 (TLL). Serine 428 serves as a coordination point for L-ornithine.

The protein belongs to the lysine N(6)-hydroxylase/L-ornithine N(5)-oxygenase family. As to quaternary structure, homotetramer. It depends on FAD as a cofactor.

It catalyses the reaction L-ornithine + NADH + O2 = N(5)-hydroxy-L-ornithine + NAD(+) + H2O. The catalysed reaction is L-ornithine + NADPH + O2 = N(5)-hydroxy-L-ornithine + NADP(+) + H2O. It participates in siderophore biosynthesis. L-ornithine N(5)-oxygenase; part of the gene cluster that mediates the biosynthesis of desferriferrichrome that chelates Fe(3+) to form ferrichrome. Fe(3+) is a key factor for induction of trap formation and the fungus uses the iron chelating desferriferrichrome to sequester Fe(3+) to inhibit trap formation and increase nematicidal activity. The biosynthesis of desferriferrichrome requires the action of the L-ornithine N(5)-oxygenase (LOO) Ao414 that hydroxylates L-ornithine at N(5), resulting in the formation of N(5)-hydroxyl-L-ornithine, which is subsequently N-acetylated to yield N(5)-acetyl-N(5)-hydroxy-L-ornithine (L-AHO). L-AHO harbors one hydroxamate moiety, which is the key core responsible for chelating iron. Then, L-AHO is further condensated with glycines to form desferriferrichrome through the NRPS protein Ao415. This Arthrobotrys oligospora (strain ATCC 24927 / CBS 115.81 / DSM 1491) (Nematode-trapping fungus) protein is L-ornithine N(5)-oxygenase.